Here is a 199-residue protein sequence, read N- to C-terminus: Recombination protein RecR (199 aa).

The segment at 57–72 (CRQCRTLTEDELCPQC) adopts a C4-type zinc-finger fold. The Toprim domain maps to 80–174 (SLLCVVQSPV…TISRIAHGVP (95 aa)).

This sequence belongs to the RecR family.

Functionally, may play a role in DNA repair. It seems to be involved in an RecBC-independent recombinational process of DNA repair. It may act with RecF and RecO. The polypeptide is Recombination protein RecR (Stutzerimonas stutzeri (strain A1501) (Pseudomonas stutzeri)).